Reading from the N-terminus, the 249-residue chain is 2,5-diamino-6-ribosylamino-4(3H)-pyrimidinone 5'-phosphate reductase (249 aa).

NADP(+) is bound by residues threonine 79, aspartate 83, methionine 164, and 187–191 (GGIVI).

This sequence belongs to the HTP reductase family. In terms of assembly, homodimer.

The catalysed reaction is 2,5-diamino-6-(1-D-ribitylamino)pyrimidin-4(3H)-one 5'-phosphate + NADP(+) = 2,5-diamino-6-(1-D-ribosylamino)pyrimidin-4(3H)-one 5'-phosphate + NADPH + H(+). It catalyses the reaction 2,5-diamino-6-(1-D-ribitylamino)pyrimidin-4(3H)-one 5'-phosphate + NAD(+) = 2,5-diamino-6-(1-D-ribosylamino)pyrimidin-4(3H)-one 5'-phosphate + NADH + H(+). It participates in cofactor biosynthesis; riboflavin biosynthesis. Its function is as follows. Catalyzes an early step in riboflavin biosynthesis, the NADPH-dependent reduction of the ribose side chain of 2,5-diamino-6-ribosylamino-4(3H)-pyrimidinone 5'-phosphate, yielding 2,5-diamino-6-ribitylamino-4(3H)-pyrimidinone 5'-phosphate. The chain is 2,5-diamino-6-ribosylamino-4(3H)-pyrimidinone 5'-phosphate reductase (RIB7) from Kluyveromyces marxianus (Yeast).